The chain runs to 155 residues: UPF0178 protein Gmet_1725 (155 aa).

Belongs to the UPF0178 family.

The protein is UPF0178 protein Gmet_1725 of Geobacter metallireducens (strain ATCC 53774 / DSM 7210 / GS-15).